A 631-amino-acid chain; its full sequence is Clathrin interactor 1 (631 aa).

Residues 24–157 form the ENTH domain; it reads NVVMNYSEIE…QDDDRLREER (134 aa). R37 is an a 1,2-diacyl-sn-glycero-3-phospho-(1D-myo-inositol-4,5-bisphosphate) binding site. Residues 60-62 are interaction with VTI1B; sequence FMY. R75 is an a 1,2-diacyl-sn-glycero-3-phospho-(1D-myo-inositol-4,5-bisphosphate) binding site. Interaction with VTI1B stretches follow at residues 102 to 104 and 150 to 161; these read SER and DDRLREERKKAK. Phosphoserine is present on residues S171, S174, S213, S218, S235, S253, and S307. A disordered region spans residues 227-339; that stretch reads FRRKDREDSP…SSGDLVDLFD (113 aa). A compositionally biased stretch (basic and acidic residues) spans 230–247; that stretch reads KDREDSPERCSDSDEEKK. Residues 308 to 318 are compositionally biased toward polar residues; that stretch reads PDQNASTHTPQ. Phosphothreonine is present on T316. Low complexity predominate over residues 319-331; the sequence is SSAKPSVPSSKSS. S320 and S630 each carry phosphoserine.

This sequence belongs to the epsin family. As to quaternary structure, binds clathrin heavy chain and AP-2. Interacts with VTI1B. Interacts with GGA2 (via GAE domain). Interacts with AP1G1 (via GAE domain). Interacts with AP1G2 (via GAE domain).

The protein localises to the cytoplasm. Its subcellular location is the perinuclear region. It localises to the membrane. It is found in the cytoplasmic vesicle. The protein resides in the clathrin-coated vesicle. Binds to membranes enriched in phosphatidylinositol 4,5-bisphosphate (PtdIns(4,5)P2). May have a role in transport via clathrin-coated vesicles from the trans-Golgi network to endosomes. Stimulates clathrin assembly. The chain is Clathrin interactor 1 (Clint1) from Mus musculus (Mouse).